Reading from the N-terminus, the 392-residue chain is uncharacterized protein (392 aa).

Belongs to the hcp1 family.

This is an uncharacterized protein from Escherichia coli (strain K12).